A 425-amino-acid polypeptide reads, in one-letter code: Riboflavin biosynthesis protein RibBA (425 aa).

The interval 1 to 204 is DHBP synthase; that stretch reads MTRLDSVERA…IADLIEWRRK (204 aa). Residues 28 to 29, aspartate 33, 141 to 145, and glutamate 165 contribute to the D-ribulose 5-phosphate site; these read RE and RPGHT. Residue glutamate 29 participates in Mg(2+) binding. Histidine 144 provides a ligand contact to Mg(2+). The tract at residues 205-425 is GTP cyclohydrolase II; it reads HEKHIERIAE…HLPGEFGGAL (221 aa). 259-263 provides a ligand contact to GTP; that stretch reads RVHSE. Cysteine 264, cysteine 275, and cysteine 277 together coordinate Zn(2+). GTP is bound by residues glutamine 280, 303 to 305, and threonine 325; that span reads EGR. The active-site Proton acceptor; for GTP cyclohydrolase activity is aspartate 337. The Nucleophile; for GTP cyclohydrolase activity role is filled by arginine 339. Threonine 360 and lysine 365 together coordinate GTP.

It in the N-terminal section; belongs to the DHBP synthase family. The protein in the C-terminal section; belongs to the GTP cyclohydrolase II family. Mg(2+) serves as cofactor. Mn(2+) is required as a cofactor. The cofactor is Zn(2+).

It catalyses the reaction D-ribulose 5-phosphate = (2S)-2-hydroxy-3-oxobutyl phosphate + formate + H(+). The enzyme catalyses GTP + 4 H2O = 2,5-diamino-6-hydroxy-4-(5-phosphoribosylamino)-pyrimidine + formate + 2 phosphate + 3 H(+). It participates in cofactor biosynthesis; riboflavin biosynthesis; 2-hydroxy-3-oxobutyl phosphate from D-ribulose 5-phosphate: step 1/1. Its pathway is cofactor biosynthesis; riboflavin biosynthesis; 5-amino-6-(D-ribitylamino)uracil from GTP: step 1/4. Its function is as follows. Catalyzes the conversion of D-ribulose 5-phosphate to formate and 3,4-dihydroxy-2-butanone 4-phosphate. Functionally, catalyzes the conversion of GTP to 2,5-diamino-6-ribosylamino-4(3H)-pyrimidinone 5'-phosphate (DARP), formate and pyrophosphate. The sequence is that of Riboflavin biosynthesis protein RibBA from Mycolicibacterium paratuberculosis (strain ATCC BAA-968 / K-10) (Mycobacterium paratuberculosis).